The following is a 353-amino-acid chain: MSEPLKPRIDFEQPLQSLDEPVLKSAQAFDEQAAEKFYPAAQELDAEDEEGRVEGLVNAALKPKRSLWRKMVTAGMVILGASVIAQSVQWVNQAWQQQDWIALGATTAGGLIILAGVGSVVTEWRRLYHLRQRAEERDIARALLVSHGVGQGRVFCEKLARQAGLDQGHPALQRWQASLHETHNDREVVELYAKLVQPALDNQARAEISRYAAESALMIAVSPLALVDMAFIAWRNIRLINRIAALYGIELGYFSRIRLFRLVLLNIAFAGASELVREVGMDWLSQDLAARLSARAAQGIGAGLLTARLGIKAMELCRPLPWLEGDKPKLGDFRRQLMNQLKNTLPKKDKTAH.

The next 3 helical transmembrane spans lie at methionine 71–valine 91, isoleucine 101–valine 121, and glutamate 214–tryptophan 234.

It belongs to the UPF0283 family.

The protein localises to the cell inner membrane. The chain is UPF0283 membrane protein YpsIP31758_1791 from Yersinia pseudotuberculosis serotype O:1b (strain IP 31758).